The following is a 458-amino-acid chain: Selection and upkeep of intraepithelial T-cells protein 3 (458 aa).

An N-terminal signal peptide occupies residues 1–24 (MGSIQIIFAAYCVVLCVLQMLVLS). Topologically, residues 25 to 237 (SEQFTITGLE…ESISIVLTGD (213 aa)) are extracellular. An Ig-like V-type domain is found at 26 to 141 (EQFTITGLER…EEHITEVKVT (116 aa)). Intrachain disulfides connect Cys49/Cys123 and Cys163/Cys217. One can recognise an Ig-like C1-type domain in the interval 142-231 (ATSSDIKIIM…LLTHQEESIS (90 aa)). Asn200 carries an N-linked (GlcNAc...) asparagine glycan. A helical membrane pass occupies residues 238 to 258 (LFSWKIDWILILSIIACVMIP). The Cytoplasmic segment spans residues 259–283 (YSMTSYLQQHLIHGSCSQRSHHWRK). The helical transmembrane segment at 284–304 (NAMVCMSSVIAIIGSMLILHL) threads the bilayer. At 305–324 (KQRVPISDQHFELDTLYLED) the chain is on the extracellular side. A helical transmembrane segment spans residues 325-345 (ISVILCVVIVFNLKLNLLTYY). Over 346–359 (RLERKYDGCTPGCK) the chain is Cytoplasmic. The chain crosses the membrane as a helical span at residues 360-380 (ACFYILKIIIIILPFVFTFGC). Over 381 to 414 (YNAIFLKYHQLQKKVSIPDPLYYFYTSWLVNMEM) the chain is Extracellular. A helical transmembrane segment spans residues 415-435 (LGVFLVFFPTFINLIEFSQFI). At 436–458 (KTVPKPIWLCQENMREDDAIRHR) the chain is on the cytoplasmic side.

It belongs to the SKINT family. In terms of tissue distribution, expressed in skin and thymus.

Its subcellular location is the membrane. Its function is as follows. May act by engaging a cell surface molecule on immature T-cells in the embryonic thymus. This is Selection and upkeep of intraepithelial T-cells protein 3 (Skint3) from Mus musculus (Mouse).